The following is a 760-amino-acid chain: Acetyl-CoA decarbonylase/synthase complex subunit alpha 1 (760 aa).

Residues C56, C59, C60, C62, C67, and C77 each coordinate [4Fe-4S] cluster. H100 serves as a coordination point for CO. [Ni-4Fe-4S] cluster-binding residues include H231, C259, and C298. 2 4Fe-4S ferredoxin-type domains span residues 381–410 (KKLQ…VEAM) and 418–450 (FEGL…MIED). The [4Fe-4S] cluster site is built by C390, C393, C396, C400, C428, C431, C434, and C438. [Ni-4Fe-4S] cluster-binding residues include C496, C525, and C560.

This sequence belongs to the Ni-containing carbon monoxide dehydrogenase family. As to quaternary structure, heterotetramer of two alpha and two epsilon subunits. The ACDS complex is made up of alpha, epsilon, beta, gamma and delta subunits with a probable stoichiometry of (alpha(2)epsilon(2))(4)-beta(8)-(gamma(1)delta(1))(8). Requires [4Fe-4S] cluster as cofactor. It depends on [Ni-4Fe-4S] cluster as a cofactor.

The catalysed reaction is CO + 2 oxidized [2Fe-2S]-[ferredoxin] + H2O = 2 reduced [2Fe-2S]-[ferredoxin] + CO2 + 2 H(+). Functionally, part of the ACDS complex that catalyzes the reversible cleavage of acetyl-CoA, allowing autotrophic growth from CO(2). The alpha-epsilon subcomponent functions as a carbon monoxide dehydrogenase. The polypeptide is Acetyl-CoA decarbonylase/synthase complex subunit alpha 1 (Methanopyrus kandleri (strain AV19 / DSM 6324 / JCM 9639 / NBRC 100938)).